The primary structure comprises 121 residues: UPF0102 protein Syncc9902_1284 (121 aa).

It belongs to the UPF0102 family.

The sequence is that of UPF0102 protein Syncc9902_1284 from Synechococcus sp. (strain CC9902).